A 374-amino-acid chain; its full sequence is Inner membrane transport permease YhhJ (374 aa).

The Cytoplasmic segment spans residues 1–22; that stretch reads MRHLRNIFNLGIKELRSLLGDK. Residues 23-43 form a helical membrane-spanning segment; the sequence is AMLTLIVFSFTVSVYSSATVT. Topologically, residues 44–172 are periplasmic; sequence PGSLNLAPIA…TRMRFNPNLD (129 aa). One can recognise an ABC transmembrane type-2 domain in the interval 133–369; that stretch reads NGYIQNIING…TIALLRFRKT (237 aa). A helical membrane pass occupies residues 173 to 193; sequence PAWFGGVMAIINNITMLAIVL. Residues 194–229 are Cytoplasmic-facing; sequence TGSALIREREHGTVEHLLVMPITPFEIMMAKIWSMG. The helical transmembrane segment at 230–250 threads the bilayer; it reads LVVLVVSGLSLVLMVKGVLGV. Topologically, residues 251-255 are periplasmic; the sequence is PIEGS. A helical membrane pass occupies residues 256-276; it reads IPLFMLGVALSLFATTSIGIF. Residues 277–283 lie on the Cytoplasmic side of the membrane; sequence MGTIARS. A helical membrane pass occupies residues 284 to 304; sequence MPQLGLLVILVLLPLQMLSGG. At 305–342 the chain is on the periplasmic side; it reads STPRESMPQMVQDIMLTMPTTHFVSLAQAILYRGAGFE. Residues 343–363 form a helical membrane-spanning segment; the sequence is IVWPQFLTLMAIGGAFFTIAL. Topologically, residues 364 to 374 are cytoplasmic; that stretch reads LRFRKTIGTMA.

Belongs to the ABC-2 integral membrane protein family.

The protein localises to the cell inner membrane. The sequence is that of Inner membrane transport permease YhhJ (yhhJ) from Escherichia coli (strain K12).